We begin with the raw amino-acid sequence, 248 residues long: MEIVIVIPARLDSTRLQRKMLADIEGEPLIVRTCQNAMRAECTDRVVVATDSPEIAEVLRKVHVEVVMTSRHARCGSERIAEAAESLEGDLFINLQGDEPLIDPATIDLVAAPYLRGERPDCTTLVFPVPAAETALIDDPHIVKAVIDSNGYALYFSRSPIPCRRGANLSTTFYRHIGIYAFQREVLQKFAGLEPSMLEKEESLEQLRLLENGFRIQCVETTVDSPGVNTPEELEFVRRIFREDLPSL.

The protein belongs to the KdsB family.

Its subcellular location is the cytoplasm. The enzyme catalyses 3-deoxy-alpha-D-manno-oct-2-ulosonate + CTP = CMP-3-deoxy-beta-D-manno-octulosonate + diphosphate. Its pathway is nucleotide-sugar biosynthesis; CMP-3-deoxy-D-manno-octulosonate biosynthesis; CMP-3-deoxy-D-manno-octulosonate from 3-deoxy-D-manno-octulosonate and CTP: step 1/1. It participates in bacterial outer membrane biogenesis; lipopolysaccharide biosynthesis. In terms of biological role, activates KDO (a required 8-carbon sugar) for incorporation into bacterial lipopolysaccharide in Gram-negative bacteria. The sequence is that of 3-deoxy-manno-octulosonate cytidylyltransferase from Chlorobium phaeobacteroides (strain BS1).